Here is a 413-residue protein sequence, read N- to C-terminus: Peptide chain release factor 1, mitochondrial (413 aa).

The residue at position 287 (Gln287) is an N5-methylglutamine. Positions Arg335–Asn363 are disordered.

It belongs to the prokaryotic/mitochondrial release factor family. Methylation of glutamine in the GGQ triplet is conserved from bacteria to mammals. N5-methylated on Gln-287 by MTQ1.

Its subcellular location is the mitochondrion. Mitochondrial peptide chain release factor that directs the termination of translation in response to the peptide chain termination codons UAA and UAG. The chain is Peptide chain release factor 1, mitochondrial (MRF1) from Saccharomyces cerevisiae (strain ATCC 204508 / S288c) (Baker's yeast).